The chain runs to 322 residues: Glycerol-3-phosphate dehydrogenase [NAD(P)+] (322 aa).

NADPH-binding residues include tryptophan 13, histidine 33, and lysine 99. Residues lysine 99, glycine 127, and serine 129 each coordinate sn-glycerol 3-phosphate. Alanine 131 lines the NADPH pocket. Lysine 182, aspartate 235, serine 245, arginine 246, and asparagine 247 together coordinate sn-glycerol 3-phosphate. Lysine 182 (proton acceptor) is an active-site residue. Position 246 (arginine 246) interacts with NADPH. NADPH is bound at residue glutamate 272.

The protein belongs to the NAD-dependent glycerol-3-phosphate dehydrogenase family.

The protein resides in the cytoplasm. It catalyses the reaction sn-glycerol 3-phosphate + NAD(+) = dihydroxyacetone phosphate + NADH + H(+). The enzyme catalyses sn-glycerol 3-phosphate + NADP(+) = dihydroxyacetone phosphate + NADPH + H(+). Its pathway is membrane lipid metabolism; glycerophospholipid metabolism. Its function is as follows. Catalyzes the reduction of the glycolytic intermediate dihydroxyacetone phosphate (DHAP) to sn-glycerol 3-phosphate (G3P), the key precursor for phospholipid synthesis. This chain is Glycerol-3-phosphate dehydrogenase [NAD(P)+], found in Ruthia magnifica subsp. Calyptogena magnifica.